A 420-amino-acid chain; its full sequence is MSRQMWLDTSALLEAISEYVVRCNGDTFSGLTTGDFNALSNMFTQLSVSSAGYVSDPRVPLQTMSNMFVSFITSTDRCGYMLRKTWFNSDTKPTVSDDFITTYIRPRLQVPMSDTVRQLNNLSLQPSAKPKLYERQNAIMKGLDIPYSEPIEPCKLFRSVAGQTGNIPMMGILATPPAQQQPFFVAERRRILFGIRSNAAIPAGAYQFVVPAWASVLSVTGAYVYFTNSFFGTIIAGVTATATAADAATTFTVPTDANNLPVQTDSRLSFSLGGGNINLELGVAKTGFCVAIEGEFTILANRSQAYYTLNSITQTPTSIDDFDVSDFLTTFLSQLRACGQYEIFSDAMDQLTNSLITNYMDPPAIPAGLAFTSPWFRFSERARTILALQNVDLNIRKLIVRHLWVITSLIAVFGRYYRPN.

This sequence belongs to the phytoreovirus outer capsid protein P8 family. As to quaternary structure, homotrimer. Homomultimer. Interacts with host peroxisomal glycolate oxidase (GOX). This interaction mediates its relocation to virus factories peripheral to host peroxisomes.

The protein resides in the virion. The protein localises to the host cytoplasm. Functionally, capsid protein which self-assembles to form the outer icosahedral capsid with a T=13 symmetry, about 70 nm in diameter and consisting of 780 molecules capsid proteins. The chain is Outer capsid protein P8 from Alopecurus aequalis (Barnyard grass).